Consider the following 371-residue polypeptide: MLKFTLHKKDGYARRGTLELNHGKIETPVFMPVGTYGSVKAMNPQNLHDIKAQIILGNTYHLWLRPGLEVVEQFGGLHGFIGWDKPILTDSGGFQVFSLSDMRKLTEEGCTFKSPINGDKLFLSPEISMKIQTVLNSDIAMQLDECTPGEATREQAKKSLQMSLRWAERSKKAFEDLKNPNALFGIVQGAMYEDLREESLRGLEQFDFPGLAVGGLSVGEPKPEMYRMLRAVGPILPEHKPHYLMGVGTPEDLVYGVAHGIDMFDCVMPTRNARNGWLFTRFGDLKIKNAKHKLDKRPIDESCTCYACQNFSRAYLHHLHRTGEILGAQLNTIHNLHFYQVIMAEMREAVEQGKFADWQARFHENRARGTD.

Aspartate 90 serves as the catalytic Proton acceptor. Residues 90 to 94 (DSGGF), aspartate 144, glutamine 188, and glycine 215 each bind substrate. Positions 246–252 (GVGTPED) are RNA binding. Residue aspartate 265 is the Nucleophile of the active site. Positions 270–274 (TRNAR) are RNA binding; important for wobble base 34 recognition. Zn(2+) contacts are provided by cysteine 303, cysteine 305, cysteine 308, and histidine 334.

It belongs to the queuine tRNA-ribosyltransferase family. As to quaternary structure, homodimer. Within each dimer, one monomer is responsible for RNA recognition and catalysis, while the other monomer binds to the replacement base PreQ1. Zn(2+) is required as a cofactor.

It catalyses the reaction 7-aminomethyl-7-carbaguanine + guanosine(34) in tRNA = 7-aminomethyl-7-carbaguanosine(34) in tRNA + guanine. It participates in tRNA modification; tRNA-queuosine biosynthesis. Its function is as follows. Catalyzes the base-exchange of a guanine (G) residue with the queuine precursor 7-aminomethyl-7-deazaguanine (PreQ1) at position 34 (anticodon wobble position) in tRNAs with GU(N) anticodons (tRNA-Asp, -Asn, -His and -Tyr). Catalysis occurs through a double-displacement mechanism. The nucleophile active site attacks the C1' of nucleotide 34 to detach the guanine base from the RNA, forming a covalent enzyme-RNA intermediate. The proton acceptor active site deprotonates the incoming PreQ1, allowing a nucleophilic attack on the C1' of the ribose to form the product. After dissociation, two additional enzymatic reactions on the tRNA convert PreQ1 to queuine (Q), resulting in the hypermodified nucleoside queuosine (7-(((4,5-cis-dihydroxy-2-cyclopenten-1-yl)amino)methyl)-7-deazaguanosine). The protein is Queuine tRNA-ribosyltransferase of Neisseria meningitidis serogroup C / serotype 2a (strain ATCC 700532 / DSM 15464 / FAM18).